We begin with the raw amino-acid sequence, 169 residues long: Glycine-rich RNA-binding protein 10 (169 aa).

In terms of domain architecture, RRM spans 6–84 (YRCFVGGLAW…RTITVNEAQS (79 aa)). 2 disordered regions span residues 80 to 101 (NEAQ…YGGR) and 121 to 169 (GYGS…GGGW). Residues 85–101 (RGGGGGGGRGGGGYGGR) show a composition bias toward gly residues.

Expressed only in roots and stems.

Functionally, possibly has a role in RNA transcription or processing during stress. This Brassica napus (Rape) protein is Glycine-rich RNA-binding protein 10 (GRP10).